Here is a 318-residue protein sequence, read N- to C-terminus: Ribosomal RNA small subunit methyltransferase H (318 aa).

S-adenosyl-L-methionine contacts are provided by residues 34–36 (GGH), D53, F82, D103, and Q110.

Belongs to the methyltransferase superfamily. RsmH family.

The protein resides in the cytoplasm. It catalyses the reaction cytidine(1402) in 16S rRNA + S-adenosyl-L-methionine = N(4)-methylcytidine(1402) in 16S rRNA + S-adenosyl-L-homocysteine + H(+). Its function is as follows. Specifically methylates the N4 position of cytidine in position 1402 (C1402) of 16S rRNA. This chain is Ribosomal RNA small subunit methyltransferase H, found in Limosilactobacillus reuteri (strain DSM 20016) (Lactobacillus reuteri).